The sequence spans 689 residues: Acetyl-coenzyme A synthetase 2-like, mitochondrial (689 aa).

Residues 1-37 constitute a mitochondrion transit peptide; the sequence is MAARTLGRGVGRLLGSLRGLSGQPARPPCGVSAPRRA. The interval 17–46 is disordered; that stretch reads LRGLSGQPARPPCGVSAPRRAASGPSGSAP. Residues 32–46 are compositionally biased toward low complexity; sequence SAPRRAASGPSGSAP. Residues 224–227 and Thr341 each bind CoA; that span reads RGGR. Lys396 bears the N6-acetyllysine mark. ATP is bound by residues 417-419, 441-446, Asp533, and Arg548; these read GEP and DTWWQT. Ser556 serves as a coordination point for CoA. Arg559 contacts ATP. Lys642 is subject to N6-acetyllysine.

The protein belongs to the ATP-dependent AMP-binding enzyme family. Interacts with SIRT3. Post-translationally, reversibly acetylated on Lys-642. The acetyl-CoA synthase activity is inhibited by acetylation and activated by deacetylation mediated by the deacetylase SIRT3.

It is found in the mitochondrion matrix. It catalyses the reaction acetate + ATP + CoA = acetyl-CoA + AMP + diphosphate. The catalysed reaction is propanoate + ATP + CoA = propanoyl-CoA + AMP + diphosphate. Inhibited by acetylation at Lys-642 and activated by deacetylation mediated by the deacetylase SIRT3. Functionally, catalyzes the synthesis of acetyl-CoA from short-chain fatty acids. Acetate is the preferred substrate. Can also utilize propionate with a much lower affinity. Provides acetyl-CoA that is utilized mainly for oxidation under ketogenic conditions. Involved in thermogenesis under ketogenic conditions, using acetate as a vital fuel when carbohydrate availability is insufficient. The chain is Acetyl-coenzyme A synthetase 2-like, mitochondrial (ACSS1) from Homo sapiens (Human).